Consider the following 456-residue polypeptide: Ezy-1 protein (456 aa).

The signal sequence occupies residues 1-28; it reads MQLSSSLRSARSAAASSGCALASRPVVA. Disordered stretches follow at residues 167 to 189, 273 to 310, and 414 to 456; these read SDGG…DGDG, FTGK…GGSG, and QPAG…SPNM. The segment covering 281 to 293 has biased composition (acidic residues); that stretch reads AEGDDGEDEEEGE. Positions 418 to 428 are enriched in basic and acidic residues; the sequence is DGHEPEPKRPE.

This is Ezy-1 protein (Ezy-1) from Chlamydomonas reinhardtii (Chlamydomonas smithii).